A 60-amino-acid polypeptide reads, in one-letter code: Large ribosomal subunit protein uL30 (60 aa).

This sequence belongs to the universal ribosomal protein uL30 family. Part of the 50S ribosomal subunit.

This Paraburkholderia phytofirmans (strain DSM 17436 / LMG 22146 / PsJN) (Burkholderia phytofirmans) protein is Large ribosomal subunit protein uL30.